Here is a 207-residue protein sequence, read N- to C-terminus: Protein N-terminal glutamine amidohydrolase (207 aa).

Residues Cys-30, His-83, and Asp-99 contribute to the active site.

The protein belongs to the NTAQ1 family. In terms of assembly, monomer.

It is found in the cytoplasm. The protein localises to the cytosol. Its subcellular location is the nucleus. It carries out the reaction N-terminal L-glutaminyl-[protein] + H2O = N-terminal L-glutamyl-[protein] + NH4(+). Mediates the side-chain deamidation of N-terminal glutamine residues to glutamate, an important step in N-end rule pathway of protein degradation. Conversion of the resulting N-terminal glutamine to glutamate renders the protein susceptible to arginylation, polyubiquitination and degradation as specified by the N-end rule. Does not act on substrates with internal or C-terminal glutamine and does not act on non-glutamine residues in any position. Does not deaminate acetylated N-terminal glutamine. With the exception of proline, all tested second-position residues on substrate peptides do not greatly influence the activity. In contrast, a proline at position 2, virtually abolishes deamidation of N-terminal glutamine. This chain is Protein N-terminal glutamine amidohydrolase (NTAQ1), found in Bos taurus (Bovine).